The sequence spans 89 residues: Bombyxin B-2 (89 aa).

Positions 1-19 are cleaved as a signal peptide; the sequence is MKTSVMFMLVFVISLMCSS. Disulfide bonds link Cys-29–Cys-75, Cys-41–Cys-88, and Cys-74–Cys-79. A propeptide spans 48 to 66 (c peptide like); the sequence is SGAQYAPYFWTRQYLGSRG.

It belongs to the insulin family. As to quaternary structure, heterodimer of a B chain and an A chain linked by two disulfide bonds.

Its subcellular location is the secreted. In terms of biological role, brain peptide responsible for activation of prothoracic glands to produce ecdysone in insects. This chain is Bombyxin B-2 (BBXB2), found in Bombyx mori (Silk moth).